The primary structure comprises 138 residues: ATP synthase epsilon chain (138 aa).

The protein belongs to the ATPase epsilon chain family. In terms of assembly, F-type ATPases have 2 components, CF(1) - the catalytic core - and CF(0) - the membrane proton channel. CF(1) has five subunits: alpha(3), beta(3), gamma(1), delta(1), epsilon(1). CF(0) has three main subunits: a, b and c.

It is found in the cell inner membrane. Functionally, produces ATP from ADP in the presence of a proton gradient across the membrane. This Cupriavidus necator (strain ATCC 17699 / DSM 428 / KCTC 22496 / NCIMB 10442 / H16 / Stanier 337) (Ralstonia eutropha) protein is ATP synthase epsilon chain.